The primary structure comprises 163 residues: Ribosome maturation factor RimM (163 aa).

A PRC barrel domain is found at 92–161 (PGEYYHHDLI…AETVTVNAAF (70 aa)).

Belongs to the RimM family. As to quaternary structure, binds ribosomal protein uS19.

It localises to the cytoplasm. Its function is as follows. An accessory protein needed during the final step in the assembly of 30S ribosomal subunit, possibly for assembly of the head region. Essential for efficient processing of 16S rRNA. May be needed both before and after RbfA during the maturation of 16S rRNA. It has affinity for free ribosomal 30S subunits but not for 70S ribosomes. This Sphingopyxis alaskensis (strain DSM 13593 / LMG 18877 / RB2256) (Sphingomonas alaskensis) protein is Ribosome maturation factor RimM.